The following is a 495-amino-acid chain: UDP-glycosyltransferase 73C6 (495 aa).

Residues S296, 356–358 (SPQ), 373–381 (HCGWNSTLE), and 395–398 (FADQ) contribute to the UDP-alpha-D-glucose site. Residues 449–475 (SDDAKERRRRAKELGESAHKAVEEGGS) form a disordered region. A compositionally biased stretch (basic and acidic residues) spans 450–471 (DDAKERRRRAKELGESAHKAVE).

Belongs to the UDP-glycosyltransferase family. As to expression, expressed in leaves and flowers, and at a very low level in roots.

Its function is as follows. Acts as a UDP-glucose:flavonol-3-O-glycoside-7-O-glucosyltransferase. 6- and 7-hydroxyflavone, but not 3- or 5-hydroxyflavone are accepted as substrates. Possesses low quercetin 3-O-glucosyltransferase, 7-O-glucosyltransferase and 4'-O-glucosyltransferase activities in vitro. The polypeptide is UDP-glycosyltransferase 73C6 (UGT73C6) (Arabidopsis thaliana (Mouse-ear cress)).